A 298-amino-acid chain; its full sequence is DegV domain-containing protein UU535 (298 aa).

Positions 5–287 (FLIMTDSSTT…KGALGIQVIA (283 aa)) constitute a DegV domain. Positions 65 and 96 each coordinate hexadecanoate.

May bind long-chain fatty acids, such as palmitate, and may play a role in lipid transport or fatty acid metabolism. The chain is DegV domain-containing protein UU535 from Ureaplasma parvum serovar 3 (strain ATCC 700970).